A 541-amino-acid chain; its full sequence is Putative nucleobase-ascorbate transporter 10 (541 aa).

Helical transmembrane passes span 52-72 (LLSL…MGGG), 79-99 (VIQT…FFGT), 101-121 (LPVI…IIYS), 141-161 (IQGA…LGVW), 173-193 (IAPL…PLLA), 196-216 (VEVG…LPRF), 235-255 (GMIL…SSGV), 299-319 (SFAM…LFYA), 376-396 (RVIQ…KFGA), 397-417 (FFAS…LCFV), 433-453 (FNIK…PQYF), and 476-496 (VIFM…DCTL).

It belongs to the nucleobase:cation symporter-2 (NCS2) (TC 2.A.40) family.

It localises to the membrane. The chain is Putative nucleobase-ascorbate transporter 10 (NAT10) from Arabidopsis thaliana (Mouse-ear cress).